A 503-amino-acid polypeptide reads, in one-letter code: Probable mitochondrial-processing peptidase subunit alpha-1, mitochondrial (503 aa).

A mitochondrion-targeting transit peptide spans 1–59 (MYRTAASRARALKGVLTRSLRPARYASSSAVAETSSSTPAYLSWLSGGSRAALTSLDMP).

Belongs to the peptidase M16 family. In terms of assembly, heterodimer of alpha and beta subunits, forming the mitochondrial processing protease (MPP) in which subunit alpha is involved in substrate recognition and binding and subunit beta is the catalytic subunit. Component of the ubiquinol-cytochrome c oxidoreductase (cytochrome b-c1 complex, complex III, CIII), a multisubunit enzyme composed of 10 subunits. The complex is composed of 3 respiratory subunits cytochrome b (MT-CYB), cytochrome c1 (CYC1-1 or CYC1-2) and Rieske protein (UCR1-1 or UCR1-2), 2 core protein subunits MPPalpha1 (or MPPalpha2) and MPPB, and 5 low-molecular weight protein subunits QCR7-1 (or QCR7-2), UCRQ-1 (or UCRQ-2), QCR9, UCRY and probably QCR6-1 (or QCR6-2). The complex exists as an obligatory dimer and forms supercomplexes (SCs) in the inner mitochondrial membrane with NADH-ubiquinone oxidoreductase (complex I, CI), resulting in different assemblies (supercomplexes SCI(1)III(2) and SCI(2)III(4)).

It is found in the mitochondrion matrix. It localises to the mitochondrion inner membrane. In terms of biological role, substrate recognition and binding subunit of the essential mitochondrial processing protease (MPP), which cleaves the mitochondrial sequence off newly imported precursors proteins. Component of the ubiquinol-cytochrome c oxidoreductase, a multisubunit transmembrane complex that is part of the mitochondrial electron transport chain which drives oxidative phosphorylation. The respiratory chain contains 3 multisubunit complexes succinate dehydrogenase (complex II, CII), ubiquinol-cytochrome c oxidoreductase (cytochrome b-c1 complex, complex III, CIII) and cytochrome c oxidase (complex IV, CIV), that cooperate to transfer electrons derived from NADH and succinate to molecular oxygen, creating an electrochemical gradient over the inner membrane that drives transmembrane transport and the ATP synthase. The cytochrome b-c1 complex catalyzes electron transfer from ubiquinol to cytochrome c, linking this redox reaction to translocation of protons across the mitochondrial inner membrane, with protons being carried across the membrane as hydrogens on the quinol. In the process called Q cycle, 2 protons are consumed from the matrix, 4 protons are released into the intermembrane space and 2 electrons are passed to cytochrome c. The sequence is that of Probable mitochondrial-processing peptidase subunit alpha-1, mitochondrial (MPPalpha1) from Arabidopsis thaliana (Mouse-ear cress).